Reading from the N-terminus, the 572-residue chain is Phosphoenolpyruvate-protein phosphotransferase (572 aa).

Residue His-191 is the Tele-phosphohistidine intermediate of the active site. Residues Arg-298 and Arg-334 each contribute to the phosphoenolpyruvate site. The Mg(2+) site is built by Glu-433 and Asp-457. Residues Asn-456–Asp-457 and Arg-467 each bind phosphoenolpyruvate. The active-site Proton donor is the Cys-504.

This sequence belongs to the PEP-utilizing enzyme family. Homodimer. Requires Mg(2+) as cofactor.

The protein localises to the cytoplasm. It catalyses the reaction L-histidyl-[protein] + phosphoenolpyruvate = N(pros)-phospho-L-histidyl-[protein] + pyruvate. General (non sugar-specific) component of the phosphoenolpyruvate-dependent sugar phosphotransferase system (sugar PTS). This major carbohydrate active-transport system catalyzes the phosphorylation of incoming sugar substrates concomitantly with their translocation across the cell membrane. Enzyme I transfers the phosphoryl group from phosphoenolpyruvate (PEP) to the phosphoryl carrier protein (HPr). The polypeptide is Phosphoenolpyruvate-protein phosphotransferase (Staphylococcus aureus (strain MSSA476)).